The sequence spans 604 residues: Aspartate--tRNA(Asp/Asn) ligase (604 aa).

Position 169 (Glu-169) interacts with L-aspartate. The aspartate stretch occupies residues 193–196 (QLFK). Residue Arg-215 participates in L-aspartate binding. ATP contacts are provided by residues 215-217 (RDE) and Gln-224. His-456 contacts L-aspartate. Glu-490 contributes to the ATP binding site. Arg-497 lines the L-aspartate pocket. ATP is bound at residue 542 to 545 (GWDR). Residues 571 to 604 (PLTGAPAPITAQQRKEAGVDAQPEPKQAEAEPEA) are disordered.

The protein belongs to the class-II aminoacyl-tRNA synthetase family. Type 1 subfamily. Homodimer.

The protein resides in the cytoplasm. The enzyme catalyses tRNA(Asx) + L-aspartate + ATP = L-aspartyl-tRNA(Asx) + AMP + diphosphate. Functionally, aspartyl-tRNA synthetase with relaxed tRNA specificity since it is able to aspartylate not only its cognate tRNA(Asp) but also tRNA(Asn). Reaction proceeds in two steps: L-aspartate is first activated by ATP to form Asp-AMP and then transferred to the acceptor end of tRNA(Asp/Asn). The chain is Aspartate--tRNA(Asp/Asn) ligase from Micrococcus luteus (strain ATCC 4698 / DSM 20030 / JCM 1464 / CCM 169 / CCUG 5858 / IAM 1056 / NBRC 3333 / NCIMB 9278 / NCTC 2665 / VKM Ac-2230) (Micrococcus lysodeikticus).